Reading from the N-terminus, the 596-residue chain is Elongation factor 4 (596 aa).

Residues 2–183 enclose the tr-type G domain; that stretch reads ENIRNFCIIA…AIIQRIPPPK (182 aa). GTP contacts are provided by residues 14-19 and 130-133; these read DHGKST and NKID.

Belongs to the TRAFAC class translation factor GTPase superfamily. Classic translation factor GTPase family. LepA subfamily.

The protein resides in the cell inner membrane. The enzyme catalyses GTP + H2O = GDP + phosphate + H(+). Functionally, required for accurate and efficient protein synthesis under certain stress conditions. May act as a fidelity factor of the translation reaction, by catalyzing a one-codon backward translocation of tRNAs on improperly translocated ribosomes. Back-translocation proceeds from a post-translocation (POST) complex to a pre-translocation (PRE) complex, thus giving elongation factor G a second chance to translocate the tRNAs correctly. Binds to ribosomes in a GTP-dependent manner. In Cytophaga hutchinsonii (strain ATCC 33406 / DSM 1761 / CIP 103989 / NBRC 15051 / NCIMB 9469 / D465), this protein is Elongation factor 4.